Reading from the N-terminus, the 139-residue chain is ATP synthase epsilon chain (139 aa).

It belongs to the ATPase epsilon chain family. F-type ATPases have 2 components, CF(1) - the catalytic core - and CF(0) - the membrane proton channel. CF(1) has five subunits: alpha(3), beta(3), gamma(1), delta(1), epsilon(1). CF(0) has three main subunits: a, b and c.

The protein localises to the cell inner membrane. Produces ATP from ADP in the presence of a proton gradient across the membrane. The chain is ATP synthase epsilon chain from Salmonella typhimurium (strain LT2 / SGSC1412 / ATCC 700720).